Here is a 40-residue protein sequence, read N- to C-terminus: uncharacterized protein (40 aa).

This is an uncharacterized protein from Haemophilus influenzae (strain ATCC 51907 / DSM 11121 / KW20 / Rd).